The following is a 506-amino-acid chain: Cysteine--tRNA ligase (506 aa).

Residue C34 coordinates Zn(2+). Positions 36 to 46 match the 'HIGH' region motif; it reads PTVYDFAHIGN. 3 residues coordinate Zn(2+): C230, H269, and E273. Positions 302–306 match the 'KMSKS' region motif; sequence KMSKS. ATP is bound at residue K305.

It belongs to the class-I aminoacyl-tRNA synthetase family. In terms of assembly, monomer. Zn(2+) serves as cofactor.

The protein localises to the cytoplasm. The catalysed reaction is tRNA(Cys) + L-cysteine + ATP = L-cysteinyl-tRNA(Cys) + AMP + diphosphate. In Brucella melitensis biotype 2 (strain ATCC 23457), this protein is Cysteine--tRNA ligase.